Reading from the N-terminus, the 232-residue chain is Large ribosomal subunit protein uL1 (232 aa).

The protein belongs to the universal ribosomal protein uL1 family. Part of the 50S ribosomal subunit.

In terms of biological role, binds directly to 23S rRNA. The L1 stalk is quite mobile in the ribosome, and is involved in E site tRNA release. Protein L1 is also a translational repressor protein, it controls the translation of the L11 operon by binding to its mRNA. The polypeptide is Large ribosomal subunit protein uL1 (Xylella fastidiosa (strain M23)).